The sequence spans 248 residues: DNA repair protein RecO (248 aa).

It belongs to the RecO family.

In terms of biological role, involved in DNA repair and RecF pathway recombination. This is DNA repair protein RecO from Bacillus cereus (strain 03BB102).